The chain runs to 337 residues: Nucleoid-associated protein HSM_0096 (337 aa).

This sequence belongs to the YejK family.

It localises to the cytoplasm. The protein localises to the nucleoid. In Histophilus somni (strain 2336) (Haemophilus somnus), this protein is Nucleoid-associated protein HSM_0096.